An 83-amino-acid polypeptide reads, in one-letter code: UPF0297 protein LCK_00468 (83 aa).

Belongs to the UPF0297 family.

The sequence is that of UPF0297 protein LCK_00468 from Leuconostoc citreum (strain KM20).